The sequence spans 523 residues: 2-isopropylmalate synthase (523 aa).

A Pyruvate carboxyltransferase domain is found at 5–267; it reads VIIFDTTLRD…HTAINHQEIW (263 aa). 4 residues coordinate Mn(2+): Asp-14, His-202, His-204, and Asn-238. Residues 392–523 are regulatory domain; sequence RLDYFSVQSG…QHNENNKETV (132 aa).

This sequence belongs to the alpha-IPM synthase/homocitrate synthase family. LeuA type 1 subfamily. As to quaternary structure, homodimer. Mn(2+) serves as cofactor.

The protein resides in the cytoplasm. The enzyme catalyses 3-methyl-2-oxobutanoate + acetyl-CoA + H2O = (2S)-2-isopropylmalate + CoA + H(+). The protein operates within amino-acid biosynthesis; L-leucine biosynthesis; L-leucine from 3-methyl-2-oxobutanoate: step 1/4. Catalyzes the condensation of the acetyl group of acetyl-CoA with 3-methyl-2-oxobutanoate (2-ketoisovalerate) to form 3-carboxy-3-hydroxy-4-methylpentanoate (2-isopropylmalate). This Shigella flexneri protein is 2-isopropylmalate synthase.